Here is a 1269-residue protein sequence, read N- to C-terminus: Furin-like protease 1, isoforms 1/1-X/2 (1269 aa).

A disordered region spans residues 1 to 57; that stretch reads MKNDVVRWSRQPTSNTTNSSSSSRSDSNSTHKHRSKSNKLNARQLGSNAARSCQQRS. A compositionally biased stretch (low complexity) spans 13-28; the sequence is TSNTTNSSSSSRSDSN. 3 N-linked (GlcNAc...) asparagine glycosylation sites follow: N15, N18, and N28. The segment covering 38–57 has biased composition (polar residues); that stretch reads NKLNARQLGSNAARSCQQRS. The N-linked (GlcNAc...) asparagine glycan is linked to N108. Residues 119-139 traverse the membrane as a helical segment; that stretch reads VFLLALQFSAVVFLCNINVGF. Positions 150-163 are enriched in low complexity; the sequence is SAGGSSPAAPSSAP. The interval 150–187 is disordered; sequence SAGGSSPAAPSSAPSSPPTVAVPPPPPPSSALKVDPNG. Positions 164-178 are enriched in pro residues; it reads SSPPTVAVPPPPPPS. N333 carries N-linked (GlcNAc...) asparagine glycosylation. Residues 340–654 enclose the Peptidase S8 domain; sequence MWYLNRGGGL…YGLMDAAEMV (315 aa). Catalysis depends on charge relay system residues D372 and H413. N426 carries an N-linked (GlcNAc...) asparagine glycan. Disulfide bonds link C430-C579 and C522-C552. S587 serves as the catalytic Charge relay system. A glycan (N-linked (GlcNAc...) asparagine) is linked at N606. Positions 662–793 constitute a P/Homo B domain; the sequence is AVPEQQRCEI…SLIFYGTTQS (132 aa). Residues C669 and C695 are joined by a disulfide bond. N-linked (GlcNAc...) asparagine glycosylation is found at N727 and N814. 4 disordered regions span residues 796–875, 891–1015, 1031–1050, and 1057–1083; these read PNDP…PPKQ, ANGK…NSRI, ELEP…AKQG, and LFKP…PSQT. Low complexity-rich tracts occupy residues 811–821 and 835–851; these read TTPNSSSTTSN and PNNF…LPLG. A glycan (N-linked (GlcNAc...) asparagine) is linked at N857. A compositionally biased stretch (polar residues) spans 858 to 868; it reads KSSYVTNNPLL. N-linked (GlcNAc...) asparagine glycosylation is found at N897 and N908. 2 stretches are compositionally biased toward low complexity: residues 905–915 and 929–940; these read NKGNKSNNGNK and TTQSTIIQTSTS. The segment covering 975–985 has biased composition (basic and acidic residues); it reads KSYDEKSRKVV. Residue N994 is glycosylated (N-linked (GlcNAc...) asparagine). Residues 1005–1014 are compositionally biased toward polar residues; sequence ESTTTSSNSR. The segment covering 1062–1074 has biased composition (polar residues); the sequence is NGGNSRQGNTKKS. Residues 1233 to 1253 traverse the membrane as a helical segment; that stretch reads LGLSLLFFMIMQVFFLNFKHA.

It belongs to the peptidase S8 family. Furin subfamily. Ca(2+) is required as a cofactor. In terms of tissue distribution, in adults, isoform 1-X is expressed in CNS, fat body and female reproductive tissues, and in embryos, in CNS, tracheal pits, hindgut, posterior spiracles and anal pads.

Its subcellular location is the golgi apparatus membrane. It catalyses the reaction Release of mature proteins from their proproteins by cleavage of -Arg-Xaa-Yaa-Arg-|-Zaa- bonds, where Xaa can be any amino acid and Yaa is Arg or Lys. Releases albumin, complement component C3 and von Willebrand factor from their respective precursors.. Functionally, furin is likely to represent the ubiquitous endoprotease activity within constitutive secretory pathways and capable of cleavage at the RX(K/R)R consensus motif. In Drosophila melanogaster (Fruit fly), this protein is Furin-like protease 1, isoforms 1/1-X/2 (Fur1).